The sequence spans 330 residues: MSQNTLKVHDLNEDAEFDENGVEAFDEKALSEEEPSDNDLAEEELLSQGATQRVLDATQLYLGEIGYSPLLTAEEEVYFARRALRGDVASRRRMIESNLRLVVKIARRYGNRGLALLDLIEEGNLGLIRAVEKFDPERGFRFSTYATWWIRQTIERAIMNQTRTIRLPIHIVKELNVYLRTARELSHKLDHEPSAEEIAEQLDKPVDDVSRMLRLNERITSVDTPLGGDSEKALLDILADEKENGPEDTTQDDDMKQSIVKWLFELNAKQREVLARRFGLLGYEAATLEDVGREIGLTRERVRQIQVEGLRRLREILQTQGLNIEALFRE.

Residues 56–89 form a sigma-70 factor domain-1 region; sequence DATQLYLGEIGYSPLLTAEEEVYFARRALRGDVA. The sigma-70 factor domain-2 stretch occupies residues 94–164; that stretch reads MIESNLRLVV…ERAIMNQTRT (71 aa). The Interaction with polymerase core subunit RpoC signature appears at 118–121; sequence DLIE. The sigma-70 factor domain-3 stretch occupies residues 174–249; it reads ELNVYLRTAR…DEKENGPEDT (76 aa). The interval 262 to 315 is sigma-70 factor domain-4; that stretch reads WLFELNAKQREVLARRFGLLGYEAATLEDVGREIGLTRERVRQIQVEGLRRLRE. A DNA-binding region (H-T-H motif) is located at residues 288–307; the sequence is LEDVGREIGLTRERVRQIQV.

It belongs to the sigma-70 factor family. RpoS subfamily. Interacts with the RNA polymerase core enzyme.

It localises to the cytoplasm. Its function is as follows. Sigma factors are initiation factors that promote the attachment of RNA polymerase to specific initiation sites and are then released. This sigma factor is the master transcriptional regulator of the stationary phase and the general stress response. The polypeptide is RNA polymerase sigma factor RpoS (Salmonella dublin).